A 298-amino-acid polypeptide reads, in one-letter code: ATP synthase gamma chain (298 aa).

The protein belongs to the ATPase gamma chain family. As to quaternary structure, F-type ATPases have 2 components, CF(1) - the catalytic core - and CF(0) - the membrane proton channel. CF(1) has five subunits: alpha(3), beta(3), gamma(1), delta(1), epsilon(1). CF(0) has three main subunits: a, b and c.

It is found in the cell inner membrane. Functionally, produces ATP from ADP in the presence of a proton gradient across the membrane. The gamma chain is believed to be important in regulating ATPase activity and the flow of protons through the CF(0) complex. The sequence is that of ATP synthase gamma chain from Albidiferax ferrireducens (strain ATCC BAA-621 / DSM 15236 / T118) (Rhodoferax ferrireducens).